Consider the following 515-residue polypeptide: Brahma-associated protein of 60 kDa (515 aa).

The segment at 1 to 124 (MSQRFAPGQA…GGSKSDFATA (124 aa)) is disordered. The segment covering 17 to 34 (QPPPPAPGMRPYPPPGAS) has biased composition (pro residues). Low complexity predominate over residues 49 to 62 (PVPGTANVAGVPGV). Residues 90-103 (TGAGGGGVGSGGGS) are compositionally biased toward gly residues. The DNA-binding stretch occupies residues 116–204 (GSKSDFATAK…SKEPTNDGEE (89 aa)). An SWIB/MDM2 domain is found at 291-368 (YQPLQFKLDP…PQRLNPLLHP (78 aa)).

As to quaternary structure, there are 2 distinct Brahma complexes in the fruit fly, the Brahma-associated proteins (BAP) and Polybromo-containing BAP (PBAP) complexes, which are composed of common subunits Brm, Mor, Snr1/Bap45, Bap111/Dalo, Bap55, Bap60 and Act42A/Bap47, and additional signature subunits osa in the BAP complex and Polybromo and Bap170 in the PBAP complex. Interacts with sisA and sc. Interacts with mor. Interacts with p53. Interacts with erm (via N-terminal). Interacts with akirin; interaction is immune stimulation-dependent; activates selected Rel target gene promoters.

Its function is as follows. Involved in the recruitment and site-specific anchoring of the Brahma complex at specific promoter sites. The Brahma complex is a multiprotein complex which is the equivalent of the yeast SWI/SNF complex and acts by remodeling the chromatin by catalyzing an ATP-dependent alteration in the structure of nucleosomal DNA. This complex can both serve as a transcriptional coactivator or corepressor, depending on the context. Participates in X-chromosomal dosage compensation. Participates in neurogenesis. The chain is Brahma-associated protein of 60 kDa (Bap60) from Drosophila melanogaster (Fruit fly).